We begin with the raw amino-acid sequence, 1136 residues long: Probable LRR receptor-like serine/threonine-protein kinase At4g36180 (1136 aa).

The signal sequence occupies residues 1–22; sequence MAMDISLFFIFLVIYAPLVSYA. Residues 23 to 751 lie on the Extracellular side of the membrane; that stretch reads DESQAEIDAL…TAEGKKKKRK (729 aa). 8 LRR repeats span residues 93–115, 117–139, 141–162, 163–186, 187–210, 211–233, 235–256, and 259–280; these read MLRK…LAYC, RLLS…MRNL, SLEV…GLPS, SLQF…ANLT, QLQL…GNLQ, SLQY…ISNC, SLVH…AYGA, and KLEV…SLFC. N-linked (GlcNAc...) asparagine glycosylation is found at asparagine 105 and asparagine 138. Residues asparagine 184, asparagine 192, and asparagine 232 are each glycosylated (N-linked (GlcNAc...) asparagine). 2 N-linked (GlcNAc...) asparagine glycosylation sites follow: asparagine 269 and asparagine 281. 18 LRR repeats span residues 283 to 304, 309 to 330, 333 to 355, 357 to 379, 381 to 403, 405 to 426, 429 to 452, 453 to 479, 480 to 500, 501 to 524, 525 to 546, 549 to 571, 573 to 595, 597 to 620, 621 to 643, 645 to 666, 669 to 691, and 694 to 716; these read SLTI…ETTA, GLQV…WLTN, SLKN…IGNL, RLEE…IKQC, SLDV…LGYM, ALKV…SMVN, QLER…MALT, SLSE…SNLS, FLNL…GNLF, KLTA…SGLP, NVQV…GFSS, SLRY…FGFL, LLVS…IGNC, ALEV…SRLP, RLKV…ISQS, SLNS…SFSG, NLTK…LALI, and NLVY…LGSR. Asparagine 365 carries N-linked (GlcNAc...) asparagine glycosylation. N-linked (GlcNAc...) asparagine glycans are attached at residues asparagine 441, asparagine 474, asparagine 477, asparagine 482, asparagine 511, asparagine 535, asparagine 554, and asparagine 594. N-linked (GlcNAc...) asparagine glycosylation is present at asparagine 631. Residues asparagine 669, asparagine 679, asparagine 699, and asparagine 719 are each glycosylated (N-linked (GlcNAc...) asparagine). The helical transmembrane segment at 752–772 threads the bilayer; the sequence is MILMIVMAAIGAFLLSLFCCF. At 773 to 1136 the chain is on the cytoplasmic side; that stretch reads YVYTLLKWRK…ADPTSQPSPA (364 aa). The tract at residues 786-819 is disordered; that stretch reads QQSTTGEKKRSPGRTSAGSRVRSSTSRSSTENGE. Over residues 799–815 the composition is skewed to low complexity; that stretch reads RTSAGSRVRSSTSRSST. Phosphothreonine occurs at positions 830 and 838. The Protein kinase domain maps to 841-1123; sequence FDEENVLSRT…LEGCRVGPDV (283 aa). A phosphotyrosine mark is found at tyrosine 915 and tyrosine 1010.

The protein belongs to the protein kinase superfamily. Ser/Thr protein kinase family.

It is found in the cell membrane. It carries out the reaction L-seryl-[protein] + ATP = O-phospho-L-seryl-[protein] + ADP + H(+). The enzyme catalyses L-threonyl-[protein] + ATP = O-phospho-L-threonyl-[protein] + ADP + H(+). This chain is Probable LRR receptor-like serine/threonine-protein kinase At4g36180, found in Arabidopsis thaliana (Mouse-ear cress).